Consider the following 369-residue polypeptide: Glutamate 5-kinase (369 aa).

Lys8 contributes to the ATP binding site. Ser49, Asp136, and Asn148 together coordinate substrate. ATP is bound by residues 168-169 and 211-217; these read TD and TGGMATK. The region spanning 276–354 is the PUA domain; sequence KGELWLDEGA…TELANILGYA (79 aa).

The protein belongs to the glutamate 5-kinase family.

The protein resides in the cytoplasm. The enzyme catalyses L-glutamate + ATP = L-glutamyl 5-phosphate + ADP. The protein operates within amino-acid biosynthesis; L-proline biosynthesis; L-glutamate 5-semialdehyde from L-glutamate: step 1/2. In terms of biological role, catalyzes the transfer of a phosphate group to glutamate to form L-glutamate 5-phosphate. This chain is Glutamate 5-kinase, found in Thermosynechococcus vestitus (strain NIES-2133 / IAM M-273 / BP-1).